The primary structure comprises 382 residues: Homoserine O-succinyltransferase (382 aa).

In terms of domain architecture, AB hydrolase-1 spans 51–359; sequence NAVLICHALS…DAPWGHDAFL (309 aa). Serine 157 functions as the Nucleophile in the catalytic mechanism. Arginine 227 is a binding site for substrate. Residues aspartate 322 and histidine 355 contribute to the active site. Residue aspartate 356 coordinates substrate.

The protein belongs to the AB hydrolase superfamily. MetX family. As to quaternary structure, homodimer.

The protein resides in the cytoplasm. The catalysed reaction is L-homoserine + succinyl-CoA = O-succinyl-L-homoserine + CoA. It functions in the pathway amino-acid biosynthesis; L-methionine biosynthesis via de novo pathway; O-succinyl-L-homoserine from L-homoserine: step 1/1. Transfers a succinyl group from succinyl-CoA to L-homoserine, forming succinyl-L-homoserine. The chain is Homoserine O-succinyltransferase from Marinobacter nauticus (strain ATCC 700491 / DSM 11845 / VT8) (Marinobacter aquaeolei).